The following is a 51-amino-acid chain: Suberization-associated anionic peroxidase 1 (51 aa).

Residue H30 participates in heme binding. Residue T31 participates in Ca(2+) binding.

It belongs to the peroxidase family. Classical plant (class III) peroxidase subfamily. The cofactor is heme b. Ca(2+) is required as a cofactor.

Its subcellular location is the secreted. It catalyses the reaction 2 a phenolic donor + H2O2 = 2 a phenolic radical donor + 2 H2O. Its function is as follows. Removal of H(2)O(2), oxidation of toxic reductants, biosynthesis and degradation of lignin, suberization, auxin catabolism, response to environmental stresses such as wounding, pathogen attack and oxidative stress. These functions might be dependent on each isozyme/isoform in each plant tissue. Suggested to catalyze the deposition of the aromatic residues of suberin on the cell wall and thus play a role in cell-suberization. This is Suberization-associated anionic peroxidase 1 from Capsicum annuum (Capsicum pepper).